The primary structure comprises 868 residues: DNA mismatch repair protein MutS (868 aa).

620-627 lines the ATP pocket; the sequence is GPNMSGKS.

It belongs to the DNA mismatch repair MutS family.

Its function is as follows. This protein is involved in the repair of mismatches in DNA. It is possible that it carries out the mismatch recognition step. This protein has a weak ATPase activity. In Flavobacterium johnsoniae (strain ATCC 17061 / DSM 2064 / JCM 8514 / BCRC 14874 / CCUG 350202 / NBRC 14942 / NCIMB 11054 / UW101) (Cytophaga johnsonae), this protein is DNA mismatch repair protein MutS.